We begin with the raw amino-acid sequence, 321 residues long: Lipoyl synthase (321 aa).

Residues Cys-68, Cys-73, Cys-79, Cys-94, Cys-98, Cys-101, and Ser-308 each contribute to the [4Fe-4S] cluster site. Positions 80 to 297 constitute a Radical SAM core domain; it reads FNHGTATFMI…KEIALELGFT (218 aa).

Belongs to the radical SAM superfamily. Lipoyl synthase family. Requires [4Fe-4S] cluster as cofactor.

It is found in the cytoplasm. It carries out the reaction [[Fe-S] cluster scaffold protein carrying a second [4Fe-4S](2+) cluster] + N(6)-octanoyl-L-lysyl-[protein] + 2 oxidized [2Fe-2S]-[ferredoxin] + 2 S-adenosyl-L-methionine + 4 H(+) = [[Fe-S] cluster scaffold protein] + N(6)-[(R)-dihydrolipoyl]-L-lysyl-[protein] + 4 Fe(3+) + 2 hydrogen sulfide + 2 5'-deoxyadenosine + 2 L-methionine + 2 reduced [2Fe-2S]-[ferredoxin]. Its pathway is protein modification; protein lipoylation via endogenous pathway; protein N(6)-(lipoyl)lysine from octanoyl-[acyl-carrier-protein]: step 2/2. Its function is as follows. Catalyzes the radical-mediated insertion of two sulfur atoms into the C-6 and C-8 positions of the octanoyl moiety bound to the lipoyl domains of lipoate-dependent enzymes, thereby converting the octanoylated domains into lipoylated derivatives. In Vibrio campbellii (strain ATCC BAA-1116), this protein is Lipoyl synthase.